Reading from the N-terminus, the 80-residue chain is Exodeoxyribonuclease 7 small subunit (80 aa).

Belongs to the XseB family. Heterooligomer composed of large and small subunits.

It localises to the cytoplasm. It catalyses the reaction Exonucleolytic cleavage in either 5'- to 3'- or 3'- to 5'-direction to yield nucleoside 5'-phosphates.. Bidirectionally degrades single-stranded DNA into large acid-insoluble oligonucleotides, which are then degraded further into small acid-soluble oligonucleotides. The polypeptide is Exodeoxyribonuclease 7 small subunit (Pseudomonas putida (strain GB-1)).